The sequence spans 201 residues: ATP-dependent Clp protease proteolytic subunit (201 aa).

Catalysis depends on serine 98, which acts as the Nucleophile. The active site involves histidine 123.

It belongs to the peptidase S14 family. Fourteen ClpP subunits assemble into 2 heptameric rings which stack back to back to give a disk-like structure with a central cavity, resembling the structure of eukaryotic proteasomes.

It localises to the cytoplasm. The enzyme catalyses Hydrolysis of proteins to small peptides in the presence of ATP and magnesium. alpha-casein is the usual test substrate. In the absence of ATP, only oligopeptides shorter than five residues are hydrolyzed (such as succinyl-Leu-Tyr-|-NHMec, and Leu-Tyr-Leu-|-Tyr-Trp, in which cleavage of the -Tyr-|-Leu- and -Tyr-|-Trp bonds also occurs).. In terms of biological role, cleaves peptides in various proteins in a process that requires ATP hydrolysis. Has a chymotrypsin-like activity. Plays a major role in the degradation of misfolded proteins. The protein is ATP-dependent Clp protease proteolytic subunit of Neorickettsia sennetsu (strain ATCC VR-367 / Miyayama) (Ehrlichia sennetsu).